Consider the following 1481-residue polypeptide: RNA helicase aquarius (1481 aa).

The tract at residues 1-416 is helical region with structural similarity to ARM repeat domains; sequence MAAPAQPKKI…LVSRHERRIS (416 aa). Positions 417–1481 are required for assembly of the IB complex; it reads QIQQLNQMPL…DAESVPTETE (1065 aa). Residues 754-773 are disordered; it reads RSGKGKKRKDADGEEDDTEE. Residues Q801, Q806, and 826–831 contribute to the ATP site; that span reads GTGKTD. K1055 carries the post-translational modification N6-acetyllysine. Acidic residues predominate over residues 1396 to 1414; it reads EEGEEGQSQETEMEAEEET. Residues 1396 to 1481 form a disordered region; sequence EEGEEGQSQE…DAESVPTETE (86 aa). Polar residues predominate over residues 1418-1448; sequence QGNLTPSPADASLSQETPAAQPDCSSQTEDT. Residues 1455–1468 show a composition bias toward low complexity; it reads ATAAEPVSAAAEAA.

It belongs to the CWF11 family. As to quaternary structure, identified in the spliceosome C complex. Component of the XAB2 complex, a multimeric protein complex composed of XAB2, PRPF19, AQR, ZNF830, ISY1, and PPIE. Identified in a pentameric intron-binding (IB) complex composed of AQR, XAB2, ISY1, ZNF830 and PPIE that is incorporated into the spliceosome as a preassembled complex. The IB complex does not contain PRPF19. Within the spliceosome, interacts with SNRPA1, SF3B1, SF3B3, SF3A1 and SF3A2.

It is found in the nucleus. The protein localises to the nucleoplasm. The enzyme catalyses ATP + H2O = ADP + phosphate + H(+). Functionally, involved in pre-mRNA splicing as component of the spliceosome. Intron-binding spliceosomal protein required to link pre-mRNA splicing and snoRNP (small nucleolar ribonucleoprotein) biogenesis. Plays a key role in position-dependent assembly of intron-encoded box C/D small snoRNP, splicing being required for snoRNP assembly. May act by helping the folding of the snoRNA sequence. Binds to intron of pre-mRNAs in a sequence-independent manner, contacting the region between snoRNA and the branchpoint of introns (40 nucleotides upstream of the branchpoint) during the late stages of splicing. Has ATP-dependent RNA helicase activity and can unwind double-stranded RNA molecules with a 3' overhang (in vitro). The protein is RNA helicase aquarius (Aqr) of Mus musculus (Mouse).